Reading from the N-terminus, the 206-residue chain is Uracil phosphoribosyltransferase (206 aa).

5-phospho-alpha-D-ribose 1-diphosphate-binding positions include R76, R101, and 128–136; that span reads DPMLATGTT. Uracil-binding positions include I191 and 196–198; that span reads GDA. Residue D197 coordinates 5-phospho-alpha-D-ribose 1-diphosphate.

This sequence belongs to the UPRTase family. It depends on Mg(2+) as a cofactor.

It carries out the reaction UMP + diphosphate = 5-phospho-alpha-D-ribose 1-diphosphate + uracil. The protein operates within pyrimidine metabolism; UMP biosynthesis via salvage pathway; UMP from uracil: step 1/1. Allosterically activated by GTP. Functionally, catalyzes the conversion of uracil and 5-phospho-alpha-D-ribose 1-diphosphate (PRPP) to UMP and diphosphate. This chain is Uracil phosphoribosyltransferase, found in Mycoplasma genitalium (strain ATCC 33530 / DSM 19775 / NCTC 10195 / G37) (Mycoplasmoides genitalium).